A 76-amino-acid polypeptide reads, in one-letter code: Esculentin-2MT1 (76 aa).

A signal peptide spans 1 to 22 (MFTMKKPLLLLFFLGTISLSLC). The propeptide occupies 23 to 37 (EEERNADEDDGEKEV). C70 and C76 are oxidised to a cystine.

This sequence belongs to the frog skin active peptide (FSAP) family. Esculentin subfamily. Expressed by the skin glands.

The protein localises to the secreted. Its function is as follows. Antimicrobial peptide. The sequence is that of Esculentin-2MT1 from Amolops mantzorum (Sichuan torrent frog).